A 578-amino-acid polypeptide reads, in one-letter code: Ketol-acid reductoisomerase, chloroplastic (578 aa).

A chloroplast-targeting transit peptide spans 1–52; the sequence is MAASTTLALSHPKTLAAAAAAAPKAPTAPAAVSFPVSHAACAPLAARRRAVT. The region spanning 90–288 is the KARI N-terminal Rossmann domain; sequence VRGGRNLFPL…ALGSPFTFAT (199 aa). NADP(+) is bound by residues 111 to 118, 144 to 149, and 183 to 187; these read GVIGWGSQ, RKGSKS, and SDAAQ. The active site involves H208. 2 consecutive KARI C-terminal knotted domains span residues 289–437 and 438–574; these read TLEQ…RPEN and DLGP…RPEL. D297, E301, E474, and E478 together coordinate Mg(2+). S500 contributes to the substrate binding site.

This sequence belongs to the ketol-acid reductoisomerase family. In terms of assembly, homodimer. The cofactor is Mg(2+).

It is found in the plastid. Its subcellular location is the chloroplast. It carries out the reaction (2R)-2,3-dihydroxy-3-methylbutanoate + NADP(+) = (2S)-2-acetolactate + NADPH + H(+). The catalysed reaction is (2R,3R)-2,3-dihydroxy-3-methylpentanoate + NADP(+) = (S)-2-ethyl-2-hydroxy-3-oxobutanoate + NADPH + H(+). It participates in amino-acid biosynthesis; L-isoleucine biosynthesis; L-isoleucine from 2-oxobutanoate: step 2/4. The protein operates within amino-acid biosynthesis; L-valine biosynthesis; L-valine from pyruvate: step 2/4. The sequence is that of Ketol-acid reductoisomerase, chloroplastic from Oryza sativa subsp. japonica (Rice).